Reading from the N-terminus, the 245-residue chain is tRNA (guanine-N(1)-)-methyltransferase (245 aa).

Residues G113 and 133–138 (IGDYVL) contribute to the S-adenosyl-L-methionine site.

Belongs to the RNA methyltransferase TrmD family. As to quaternary structure, homodimer.

It is found in the cytoplasm. The enzyme catalyses guanosine(37) in tRNA + S-adenosyl-L-methionine = N(1)-methylguanosine(37) in tRNA + S-adenosyl-L-homocysteine + H(+). Functionally, specifically methylates guanosine-37 in various tRNAs. In Histophilus somni (strain 129Pt) (Haemophilus somnus), this protein is tRNA (guanine-N(1)-)-methyltransferase.